Consider the following 288-residue polypeptide: Pantothenate synthetase (288 aa).

30–37 (MGNLHAGH) contributes to the ATP binding site. His37 (proton donor) is an active-site residue. Residue Gln61 coordinates (R)-pantoate. Position 61 (Gln61) interacts with beta-alanine. 149–152 (GLKD) contributes to the ATP binding site. Residue Gln155 coordinates (R)-pantoate. ATP contacts are provided by residues Ile178 and 186-189 (LSSR).

This sequence belongs to the pantothenate synthetase family. In terms of assembly, homodimer.

The protein localises to the cytoplasm. It carries out the reaction (R)-pantoate + beta-alanine + ATP = (R)-pantothenate + AMP + diphosphate + H(+). It functions in the pathway cofactor biosynthesis; (R)-pantothenate biosynthesis; (R)-pantothenate from (R)-pantoate and beta-alanine: step 1/1. Its function is as follows. Catalyzes the condensation of pantoate with beta-alanine in an ATP-dependent reaction via a pantoyl-adenylate intermediate. In Colwellia psychrerythraea (strain 34H / ATCC BAA-681) (Vibrio psychroerythus), this protein is Pantothenate synthetase.